Consider the following 293-residue polypeptide: Acetylglutamate kinase (293 aa).

Residues 67–68, arginine 89, and asparagine 190 each bind substrate; that span reads GG.

Belongs to the acetylglutamate kinase family. ArgB subfamily.

Its subcellular location is the cytoplasm. It catalyses the reaction N-acetyl-L-glutamate + ATP = N-acetyl-L-glutamyl 5-phosphate + ADP. It functions in the pathway amino-acid biosynthesis; L-arginine biosynthesis; N(2)-acetyl-L-ornithine from L-glutamate: step 2/4. In terms of biological role, catalyzes the ATP-dependent phosphorylation of N-acetyl-L-glutamate. This Nitrosospira multiformis (strain ATCC 25196 / NCIMB 11849 / C 71) protein is Acetylglutamate kinase.